Here is an 85-residue protein sequence, read N- to C-terminus: UPF0386 protein Atu1321 (85 aa).

The protein belongs to the UPF0386 family.

The polypeptide is UPF0386 protein Atu1321 (Agrobacterium fabrum (strain C58 / ATCC 33970) (Agrobacterium tumefaciens (strain C58))).